Consider the following 655-residue polypeptide: uncharacterized protein (655 aa).

The N-terminal stretch at 1–23 (MKRTIKYLSFLGLIPFLSITTIS) is a signal peptide. Cysteine 24 is lipidated: N-palmitoyl cysteine. Cysteine 24 carries the S-diacylglycerol cysteine lipid modification.

Belongs to the MG067/MG068/MG395 family.

Its subcellular location is the cell membrane. This is an uncharacterized protein from Mycoplasma capricolum subsp. capricolum (strain California kid / ATCC 27343 / NCTC 10154).